Here is a 191-residue protein sequence, read N- to C-terminus: Corticoliberin (191 aa).

A signal peptide spans 1 to 24 (MRLPLLVSAGVLLVALLPCPPCRA). A propeptide spanning residues 25 to 148 (LLSRGPVLGA…RQEAPERERR (124 aa)) is cleaved from the precursor. The interval 115-153 (PLPRRPLDSPSGPAERGAENALSSRQEAPERERRSEEPP) is disordered. Over residues 141-151 (EAPERERRSEE) the composition is skewed to basic and acidic residues. Ile189 carries the isoleucine amide modification.

The protein belongs to the sauvagine/corticotropin-releasing factor/urotensin I family. Interacts (via C-terminus) with CRFR1 (via N-terminal extracellular domain). Produced by the hypothalamus.

It localises to the secreted. Hormone regulating the release of corticotropin from pituitary gland. Induces NLRP6 in intestinal epithelial cells, hence may influence gut microbiota profile. The sequence is that of Corticoliberin (CRH) from Sus scrofa (Pig).